A 419-amino-acid polypeptide reads, in one-letter code: L-rhamnose isomerase (419 aa).

Positions 262, 294, and 296 each coordinate Mn(2+).

The protein belongs to the rhamnose isomerase family. Homotetramer. It depends on Mn(2+) as a cofactor.

The protein resides in the cytoplasm. The catalysed reaction is L-rhamnopyranose = L-rhamnulose. It participates in carbohydrate degradation; L-rhamnose degradation; glycerone phosphate from L-rhamnose: step 1/3. Functionally, catalyzes the interconversion of L-rhamnose and L-rhamnulose. This is L-rhamnose isomerase from Shigella sonnei (strain Ss046).